The sequence spans 235 residues: MAREGKRIRAAREGIDPTKVYSLADAVKLIKERAKAKFDETFEISMNLGVDPRHADQMVRGVCNLPNGSGRTVRVAVFARGAKADEAKAAGADIVGAEDLLETIQGGTINFDRCIATPDMMPLVGRLGKVLGPRGLMPNPKVGTVTMDVKGAVGAAKGGAVEFRVEKAGIVHAGIGKVSFDDQKIVENARAFADAVARAKPSGAKGTYIQRIAVSSTMGPGIKVDPASVLAAATA.

It belongs to the universal ribosomal protein uL1 family. In terms of assembly, part of the 50S ribosomal subunit.

Binds directly to 23S rRNA. The L1 stalk is quite mobile in the ribosome, and is involved in E site tRNA release. Its function is as follows. Protein L1 is also a translational repressor protein, it controls the translation of the L11 operon by binding to its mRNA. This Methylobacterium nodulans (strain LMG 21967 / CNCM I-2342 / ORS 2060) protein is Large ribosomal subunit protein uL1.